The following is a 69-amino-acid chain: DNA-directed RNA polymerase subunit omega (69 aa).

The protein belongs to the RNA polymerase subunit omega family. As to quaternary structure, the RNAP catalytic core consists of 2 alpha, 1 beta, 1 beta' and 1 omega subunit. When a sigma factor is associated with the core the holoenzyme is formed, which can initiate transcription.

The catalysed reaction is RNA(n) + a ribonucleoside 5'-triphosphate = RNA(n+1) + diphosphate. In terms of biological role, promotes RNA polymerase assembly. Latches the N- and C-terminal regions of the beta' subunit thereby facilitating its interaction with the beta and alpha subunits. This is DNA-directed RNA polymerase subunit omega from Pelotomaculum thermopropionicum (strain DSM 13744 / JCM 10971 / SI).